The chain runs to 107 residues: Phosphoribosyl-ATP pyrophosphatase (107 aa).

This sequence belongs to the PRA-PH family.

Its subcellular location is the cytoplasm. It carries out the reaction 1-(5-phospho-beta-D-ribosyl)-ATP + H2O = 1-(5-phospho-beta-D-ribosyl)-5'-AMP + diphosphate + H(+). It participates in amino-acid biosynthesis; L-histidine biosynthesis; L-histidine from 5-phospho-alpha-D-ribose 1-diphosphate: step 2/9. This is Phosphoribosyl-ATP pyrophosphatase from Brucella abortus (strain S19).